The chain runs to 317 residues: Glycine--tRNA ligase alpha subunit (317 aa).

It belongs to the class-II aminoacyl-tRNA synthetase family. In terms of assembly, tetramer of two alpha and two beta subunits.

It is found in the cytoplasm. The catalysed reaction is tRNA(Gly) + glycine + ATP = glycyl-tRNA(Gly) + AMP + diphosphate. The polypeptide is Glycine--tRNA ligase alpha subunit (Leptothrix cholodnii (strain ATCC 51168 / LMG 8142 / SP-6) (Leptothrix discophora (strain SP-6))).